The primary structure comprises 311 residues: Salutaridine reductase (311 aa).

Residues 21–24 (NKGI), Arg44, 70–71 (DV), and Asn98 each bind NADP(+). Residues Tyr129 and Ser180 each contribute to the substrate site. Residues Tyr236, Lys240, and 267–272 (VKTEMN) contribute to the NADP(+) site. Tyr236 acts as the Proton acceptor in catalysis. A disulfide bridge connects residues Cys263 and Cys305.

This sequence belongs to the short-chain dehydrogenases/reductases (SDR) family.

The enzyme catalyses (7S)-salutaridinol + NADP(+) = salutaridine + NADPH + H(+). The protein operates within alkaloid biosynthesis; morphine biosynthesis. Its activity is regulated as follows. Strong substrate inhibition. Was thought to be due to mutually exclusive productive and non-productive modes of substrate binding in the active site. Alternatively, SALR may undergo significant conformational changes during catalytic turnover. Short-chain dehydrogenases/reductases involved in biosynthesis of morphinan-type benzylisoquinoline and opiate alkaloids natural products. Catalyzes specifically the stereospecific conversion of salutaridine to salutaridinol. The polypeptide is Salutaridine reductase (Papaver somniferum (Opium poppy)).